Consider the following 512-residue polypeptide: Glutamate--tRNA ligase (512 aa).

The 'HIGH' region signature appears at 11-21; that stretch reads PSPTGALHIGG. The short motif at 263 to 267 is the 'KMSKS' region element; that stretch reads KLSKR. Lys-266 provides a ligand contact to ATP.

This sequence belongs to the class-I aminoacyl-tRNA synthetase family. Glutamate--tRNA ligase type 1 subfamily. Monomer.

The protein localises to the cytoplasm. The enzyme catalyses tRNA(Glu) + L-glutamate + ATP = L-glutamyl-tRNA(Glu) + AMP + diphosphate. Its function is as follows. Catalyzes the attachment of glutamate to tRNA(Glu) in a two-step reaction: glutamate is first activated by ATP to form Glu-AMP and then transferred to the acceptor end of tRNA(Glu). This Amoebophilus asiaticus (strain 5a2) protein is Glutamate--tRNA ligase.